Reading from the N-terminus, the 306-residue chain is Acetylglutamate kinase (306 aa).

Residues 79–80, Arg-101, and Asn-203 each bind substrate; that span reads GG.

This sequence belongs to the acetylglutamate kinase family. ArgB subfamily.

The protein localises to the cytoplasm. It carries out the reaction N-acetyl-L-glutamate + ATP = N-acetyl-L-glutamyl 5-phosphate + ADP. It functions in the pathway amino-acid biosynthesis; L-arginine biosynthesis; N(2)-acetyl-L-ornithine from L-glutamate: step 2/4. Functionally, catalyzes the ATP-dependent phosphorylation of N-acetyl-L-glutamate. The protein is Acetylglutamate kinase of Polaromonas naphthalenivorans (strain CJ2).